The following is a 189-amino-acid chain: Movement protein (189 aa).

Belongs to the tombusvirus/aureusvirus movement protein p22 family.

It is found in the host membrane. Functionally, transports viral genome to neighboring plant cells directly through plasmosdesmata, without any budding. The movement protein allows efficient cell to cell propagation, by bypassing the host cell wall barrier. The sequence is that of Movement protein from Artichoke mottled crinkle virus (AMCV).